The following is a 347-amino-acid chain: NADH-ubiquinone oxidoreductase chain 2 (347 aa).

The next 11 helical transmembrane spans lie at 2–22 (SPYV…MTLI), 25–45 (HWLT…PLMT), 56–76 (AIKY…SAIF), 96–116 (FMMT…FWVP), 122–142 (IPLL…ISIF), 149–169 (LNMS…GWGG), 178–197 (ILAY…IMIY), 202–219 (ILNL…FMVL), 241–261 (MIII…TGFM), 278–298 (LAMM…RIIY), and 323–343 (ILPI…TPMF).

This sequence belongs to the complex I subunit 2 family. Core subunit of respiratory chain NADH dehydrogenase (Complex I) which is composed of 45 different subunits. Interacts with TMEM242.

Its subcellular location is the mitochondrion inner membrane. The enzyme catalyses a ubiquinone + NADH + 5 H(+)(in) = a ubiquinol + NAD(+) + 4 H(+)(out). Functionally, core subunit of the mitochondrial membrane respiratory chain NADH dehydrogenase (Complex I) which catalyzes electron transfer from NADH through the respiratory chain, using ubiquinone as an electron acceptor. Essential for the catalytic activity and assembly of complex I. The polypeptide is NADH-ubiquinone oxidoreductase chain 2 (Metachirus nudicaudatus (Brown four-eyed opossum)).